The chain runs to 595 residues: Tectonic-3 (595 aa).

The first 22 residues, 1–22, serve as a signal peptide directing secretion; sequence MCTLQLHLLLLVVLMLSETARP. The tract at residues 23–62 is disordered; it reads QPSSTARAFPTSWGLEPVTPEVPTSAPPDSSESPTPWTLS. Residues 23–575 lie on the Extracellular side of the membrane; it reads QPSSTARAFP…ALSRGASVQK (553 aa). Over residues 49 to 62 the composition is skewed to polar residues; it reads PPDSSESPTPWTLS. N-linked (GlcNAc...) asparagine glycans are attached at residues Asn-167 and Asn-336. The helical transmembrane segment at 576–594 threads the bilayer; sequence DSLVLILCVLLLGLLNSQT. Residue Lys-595 is a topological domain, cytoplasmic.

The protein belongs to the tectonic family. In terms of assembly, part of the tectonic-like complex (also named B9 complex).

The protein localises to the membrane. Part of the tectonic-like complex which is required for tissue-specific ciliogenesis and may regulate ciliary membrane composition. May be involved in apoptosis regulation. Necessary for signal transduction through the sonic hedgehog (Shh) signaling pathway. This chain is Tectonic-3 (Tctn3), found in Mus musculus (Mouse).